A 259-amino-acid polypeptide reads, in one-letter code: Ribonuclease PH (259 aa).

Phosphate contacts are provided by residues arginine 88 and 126-128 (GTR).

This sequence belongs to the RNase PH family. In terms of assembly, homohexameric ring arranged as a trimer of dimers.

It catalyses the reaction tRNA(n+1) + phosphate = tRNA(n) + a ribonucleoside 5'-diphosphate. Phosphorolytic 3'-5' exoribonuclease that plays an important role in tRNA 3'-end maturation. Removes nucleotide residues following the 3'-CCA terminus of tRNAs; can also add nucleotides to the ends of RNA molecules by using nucleoside diphosphates as substrates, but this may not be physiologically important. Probably plays a role in initiation of 16S rRNA degradation (leading to ribosome degradation) during starvation. This chain is Ribonuclease PH, found in Mycolicibacterium smegmatis (strain ATCC 700084 / mc(2)155) (Mycobacterium smegmatis).